A 748-amino-acid chain; its full sequence is Catalase-peroxidase 2 (748 aa).

The segment covering 1-24 (MSSDTSDSRPPNPDTKTASTSESE) has biased composition (polar residues). Residues 1 to 43 (MSSDTSDSRPPNPDTKTASTSESENPAIPSPKPKSGAPLRNQD) form a disordered region. Residues 113 to 238 (WHSAGTYRIH…YGATTMGLIY (126 aa)) constitute a cross-link (tryptophyl-tyrosyl-methioninium (Trp-Tyr) (with M-264)). The active-site Proton acceptor is H114. A cross-link (tryptophyl-tyrosyl-methioninium (Tyr-Met) (with W-113)) is located at residues 238–264 (YVNPEGPEGQPDPLAAAHDIRETFGRM). H279 provides a ligand contact to heme b.

This sequence belongs to the peroxidase family. Peroxidase/catalase subfamily. Homotetramer. Heme b serves as cofactor. In terms of processing, formation of the three residue Trp-Tyr-Met cross-link is important for the catalase, but not the peroxidase activity of the enzyme.

It catalyses the reaction H2O2 + AH2 = A + 2 H2O. The enzyme catalyses 2 H2O2 = O2 + 2 H2O. Functionally, bifunctional enzyme with both catalase and broad-spectrum peroxidase activity. May play a role in the intracellular survival of mycobacteria. The protein is Catalase-peroxidase 2 of Mycolicibacterium smegmatis (strain ATCC 700084 / mc(2)155) (Mycobacterium smegmatis).